Here is a 274-residue protein sequence, read N- to C-terminus: Octanoyltransferase LipM (274 aa).

Residues 31-245 (GEVPPTLRLY…GFAEALGARL (215 aa)) form the BPL/LPL catalytic domain. The active-site Acyl-thioester intermediate is the Cys147.

It belongs to the octanoyltransferase LipM family. Monomer.

The catalysed reaction is octanoyl-[ACP] + L-lysyl-[protein] = N(6)-octanoyl-L-lysyl-[protein] + holo-[ACP] + H(+). The protein operates within protein modification; protein lipoylation via endogenous pathway; protein N(6)-(lipoyl)lysine from octanoyl-[acyl-carrier-protein]. Its function is as follows. Catalyzes the transfer of endogenously produced octanoic acid from octanoyl-acyl-carrier-protein onto the lipoyl domain of GcvH, an intermediate carrier during protein lipoylation. The chain is Octanoyltransferase LipM from Kyrpidia tusciae (strain DSM 2912 / NBRC 15312 / T2) (Bacillus tusciae).